We begin with the raw amino-acid sequence, 98 residues long: Large ribosomal subunit protein uL23c (98 aa).

The protein belongs to the universal ribosomal protein uL23 family. In terms of assembly, part of the 50S ribosomal subunit.

Its subcellular location is the plastid. It is found in the chloroplast. Binds to 23S rRNA. The polypeptide is Large ribosomal subunit protein uL23c (rpl23) (Thalassiosira pseudonana (Marine diatom)).